A 583-amino-acid chain; its full sequence is Propane 2-monooxygenase operon transcriptional activator MimR (583 aa).

Residues 320-513 (LAGQSSSFRR…LRHVLTETVR (194 aa)) form the Sigma-54 factor interaction domain. Residues 349-356 (ERGSGRTY) and 395-404 (SADFAVIVSD) contribute to the ATP site.

Acts as a transcriptional activator of the mimABCD operon encoding the propane 2-monooxygenase complex. This chain is Propane 2-monooxygenase operon transcriptional activator MimR, found in Mycolicibacterium smegmatis (strain ATCC 700084 / mc(2)155) (Mycobacterium smegmatis).